Consider the following 171-residue polypeptide: Adenine phosphoribosyltransferase (171 aa).

It belongs to the purine/pyrimidine phosphoribosyltransferase family. In terms of assembly, homodimer.

The protein resides in the cytoplasm. It catalyses the reaction AMP + diphosphate = 5-phospho-alpha-D-ribose 1-diphosphate + adenine. The protein operates within purine metabolism; AMP biosynthesis via salvage pathway; AMP from adenine: step 1/1. Its function is as follows. Catalyzes a salvage reaction resulting in the formation of AMP, that is energically less costly than de novo synthesis. The polypeptide is Adenine phosphoribosyltransferase (Gloeobacter violaceus (strain ATCC 29082 / PCC 7421)).